The sequence spans 653 residues: Exocyst complex component EXO70C1 (653 aa).

Composition is skewed to basic and acidic residues over residues 1 to 34 (MEKS…DELH), 159 to 177 (SREE…DGSN), and 438 to 451 (NKPE…QQQR). Disordered regions lie at residues 1 to 50 (MEKS…HSLV), 159 to 190 (SREE…DSDR), and 432 to 456 (EANQ…DDEE).

This sequence belongs to the EXO70 family. In terms of assembly, interacts with ROH1A. Binds directly to B1L. Phosphorylated. As to expression, expressed in anthers, pollen and root trichoblast cells.

The protein localises to the cytoplasm. In terms of biological role, required for global plant growth and for male transmission. Involved in the regulation of tip growth of pollen tube. The chain is Exocyst complex component EXO70C1 from Arabidopsis thaliana (Mouse-ear cress).